The primary structure comprises 729 residues: Fatty acid oxidation complex subunit alpha (729 aa).

An enoyl-CoA hydratase/isomerase region spans residues 1-189 (MLYKGDTLYL…KIGLVDGVVK (189 aa)). Aspartate 296 contacts substrate. Positions 311–729 (ETPKQAAVLG…ARPVGDLKTA (419 aa)) are 3-hydroxyacyl-CoA dehydrogenase. NAD(+)-binding positions include methionine 324, aspartate 343, 400–402 (VVE), lysine 407, and serine 429. Catalysis depends on histidine 450, which acts as the For 3-hydroxyacyl-CoA dehydrogenase activity. Position 453 (asparagine 453) interacts with NAD(+). Residues asparagine 500 and tyrosine 660 each contribute to the substrate site. Residues 708–729 (RHNEPYYPPVEPARPVGDLKTA) form a disordered region.

This sequence in the N-terminal section; belongs to the enoyl-CoA hydratase/isomerase family. In the C-terminal section; belongs to the 3-hydroxyacyl-CoA dehydrogenase family. Heterotetramer of two alpha chains (FadB) and two beta chains (FadA).

It carries out the reaction a (3S)-3-hydroxyacyl-CoA + NAD(+) = a 3-oxoacyl-CoA + NADH + H(+). The catalysed reaction is a (3S)-3-hydroxyacyl-CoA = a (2E)-enoyl-CoA + H2O. The enzyme catalyses a 4-saturated-(3S)-3-hydroxyacyl-CoA = a (3E)-enoyl-CoA + H2O. It catalyses the reaction (3S)-3-hydroxybutanoyl-CoA = (3R)-3-hydroxybutanoyl-CoA. It carries out the reaction a (3Z)-enoyl-CoA = a 4-saturated (2E)-enoyl-CoA. The catalysed reaction is a (3E)-enoyl-CoA = a 4-saturated (2E)-enoyl-CoA. Its pathway is lipid metabolism; fatty acid beta-oxidation. In terms of biological role, involved in the aerobic and anaerobic degradation of long-chain fatty acids via beta-oxidation cycle. Catalyzes the formation of 3-oxoacyl-CoA from enoyl-CoA via L-3-hydroxyacyl-CoA. It can also use D-3-hydroxyacyl-CoA and cis-3-enoyl-CoA as substrate. The chain is Fatty acid oxidation complex subunit alpha from Escherichia coli O17:K52:H18 (strain UMN026 / ExPEC).